The chain runs to 217 residues: Outer-membrane lipoprotein LolB (217 aa).

Positions 1–20 are cleaved as a signal peptide; it reads MSKTVRTLALGGLVLAGLSA. The N-palmitoyl cysteine moiety is linked to residue C21. The S-diacylglycerol cysteine moiety is linked to residue C21. The tract at residues 105–124 is disordered; it reads DTTSGAGRLEGLEGGPRSGP.

The protein belongs to the LolB family. Monomer.

The protein localises to the cell outer membrane. Plays a critical role in the incorporation of lipoproteins in the outer membrane after they are released by the LolA protein. In Xanthomonas axonopodis pv. citri (strain 306), this protein is Outer-membrane lipoprotein LolB.